The primary structure comprises 457 residues: tRNA (guanine(37)-N(1))-methyltransferase (457 aa).

S-adenosyl-L-methionine contacts are provided by residues histidine 240, 278–279, 306–307, and asparagine 338; these read DL and DG.

This sequence belongs to the class I-like SAM-binding methyltransferase superfamily. TRM5/TYW2 family. Monomer.

The protein localises to the mitochondrion matrix. It localises to the nucleus. Its subcellular location is the cytoplasm. The enzyme catalyses guanosine(37) in tRNA + S-adenosyl-L-methionine = N(1)-methylguanosine(37) in tRNA + S-adenosyl-L-homocysteine + H(+). Functionally, specifically methylates the N1 position of guanosine-37 in various cytoplasmic and mitochondrial tRNAs. Methylation is not dependent on the nature of the nucleoside 5' of the target nucleoside. This is the first step in the biosynthesis of wybutosine (yW), a modified base adjacent to the anticodon of tRNAs and required for accurate decoding. This chain is tRNA (guanine(37)-N(1))-methyltransferase, found in Drosophila melanogaster (Fruit fly).